A 71-amino-acid polypeptide reads, in one-letter code: Brevinin-1CG4 (71 aa).

Positions 1–22 (MFTLKKSLLLLFFLGTINLSLC) are cleaved as a signal peptide. Residues 23–45 (EQERNADEEERRDDSDKRDVEVE) constitute a propeptide, removed in mature form. A disulfide bridge connects residues Cys-65 and Cys-71.

This sequence belongs to the frog skin active peptide (FSAP) family. Brevinin subfamily. Expressed by the skin glands.

Its subcellular location is the secreted. Functionally, antimicrobial peptide active against a variety of Gram-positive and some Gram-negative bacterial strains. Has antifungal activity against C.albicans ATCC 10231 and a slime mold isolate. Has hemolytic activity against human erythrocytes. The sequence is that of Brevinin-1CG4 from Amolops chunganensis (Chungan torrent frog).